Here is a 359-residue protein sequence, read N- to C-terminus: 3-dehydroquinate synthase (359 aa).

NAD(+) is bound by residues 71–76 (DGEAYK), 105–109 (GVIGD), 129–130 (TT), Lys142, Lys151, and 169–172 (TLGT). 3 residues coordinate Zn(2+): Glu184, His247, and His264.

It belongs to the sugar phosphate cyclases superfamily. Dehydroquinate synthase family. Co(2+) is required as a cofactor. It depends on Zn(2+) as a cofactor. NAD(+) serves as cofactor.

Its subcellular location is the cytoplasm. The catalysed reaction is 7-phospho-2-dehydro-3-deoxy-D-arabino-heptonate = 3-dehydroquinate + phosphate. The protein operates within metabolic intermediate biosynthesis; chorismate biosynthesis; chorismate from D-erythrose 4-phosphate and phosphoenolpyruvate: step 2/7. In terms of biological role, catalyzes the conversion of 3-deoxy-D-arabino-heptulosonate 7-phosphate (DAHP) to dehydroquinate (DHQ). This chain is 3-dehydroquinate synthase, found in Thiobacillus denitrificans (strain ATCC 25259 / T1).